Reading from the N-terminus, the 255-residue chain is uncharacterized protein (255 aa).

The first 23 residues, 1–23 (MKRLNKLVLGISFLFLVISITAG), serve as a signal peptide directing secretion. The N-palmitoyl cysteine moiety is linked to residue Cys-24. Cys-24 is lipidated: S-diacylglycerol cysteine.

Belongs to the staphylococcal tandem lipoprotein family.

Its subcellular location is the cell membrane. This is an uncharacterized protein from Staphylococcus aureus (strain N315).